We begin with the raw amino-acid sequence, 222 residues long: Large ribosomal subunit protein uL3 (222 aa).

The disordered stretch occupies residues 129-150 (HNFRGLPDSHGTERKHRSPGSI).

This sequence belongs to the universal ribosomal protein uL3 family. In terms of assembly, part of the 50S ribosomal subunit. Forms a cluster with proteins L14 and L19.

In terms of biological role, one of the primary rRNA binding proteins, it binds directly near the 3'-end of the 23S rRNA, where it nucleates assembly of the 50S subunit. The chain is Large ribosomal subunit protein uL3 from Acidothermus cellulolyticus (strain ATCC 43068 / DSM 8971 / 11B).